A 322-amino-acid chain; its full sequence is tRNA uridine(34) hydroxylase (322 aa).

One can recognise a Rhodanese domain in the interval 125-219; that stretch reads QSPDTVVIDA…YGKDPEVQGK (95 aa). The active-site Cysteine persulfide intermediate is the Cys-179.

Belongs to the TrhO family.

The catalysed reaction is uridine(34) in tRNA + AH2 + O2 = 5-hydroxyuridine(34) in tRNA + A + H2O. Functionally, catalyzes oxygen-dependent 5-hydroxyuridine (ho5U) modification at position 34 in tRNAs. The polypeptide is tRNA uridine(34) hydroxylase (Bacillus pumilus (strain SAFR-032)).